A 616-amino-acid polypeptide reads, in one-letter code: MALLQIAEPGQSAAPHQQKLAVGIDLGTTNSLVAAVRSGEASTLVDQQGRSILPSVVHYTSVSYTTGDEARANAQTDPKNTIISVKRLIGRSLSDIQQRYPSLPYQFEESDNGLPVIRTEQGNKNPIQVSSDILRALGQRAESTLGGELSGAVITVPAYFDDAQRAGTKDAAQLAGLHVLRLLNEPTAAAIAYGLDSGKEGVIAVYDLGGGTFDISILRLSKGVFEVLATGGDSALGGDDFDHLIAEHFQEQMGLSELTAEQNRILLDAATEAKIGLSEAESVNVEVLGWAGSLTREEFEDIIKPLVKKTLLSCRRALKDAEVDADDVLEVVMVGGSTRTLLVREMVGDFFGRTPLTSINPDEVVAIGASIQADILVGNKPDSEMLLLDVIPLSLGIETMGGLVEKIIPRNTTIPVARAQEFTTFKDGQTAMTVHTVQGEREMVDDCRSLARFALKGIPPMAAGAAHIRVTYQVDADGLLSVTAMEKSTGVQAEIQVKPSYGLSDNEVASMLKDSMTFAKEDMQARALAEQRVEADRVIEGLIAAMQADGDELLDEQEKQHLLQAIEALIEVRNGESADAIELEIKNTDKASQDFASRRMDKSIRAALSGQSVDNI.

This sequence belongs to the heat shock protein 70 family.

Functionally, chaperone involved in the maturation of iron-sulfur cluster-containing proteins. Has a low intrinsic ATPase activity which is markedly stimulated by HscB. The polypeptide is Chaperone protein HscA homolog (Vibrio atlanticus (strain LGP32) (Vibrio splendidus (strain Mel32))).